We begin with the raw amino-acid sequence, 178 residues long: Inorganic pyrophosphatase (178 aa).

Substrate is bound by residues K30, R44, and Y56. Mg(2+)-binding residues include D66, D71, and D103. Y142 contributes to the substrate binding site.

It belongs to the PPase family. In terms of assembly, homohexamer. Mg(2+) is required as a cofactor.

It is found in the cytoplasm. The catalysed reaction is diphosphate + H2O = 2 phosphate + H(+). Its function is as follows. Catalyzes the hydrolysis of inorganic pyrophosphate (PPi) forming two phosphate ions. The sequence is that of Inorganic pyrophosphatase from Bradyrhizobium diazoefficiens (strain JCM 10833 / BCRC 13528 / IAM 13628 / NBRC 14792 / USDA 110).